Reading from the N-terminus, the 823-residue chain is MEIKEVDDRAELLRYTNNIPLLGKLVNHQPLWSTNPKLKSFSLEKISAPDQRRVQEALVVKDLLNVLIGLEGTYIRYFNDYEPSDPETPIEFKIAKKMDPSFKTFSRRIVRYGKQYMILTRAYEKWSDTSFGMVLQRFAYEIRRFLEDVYLKTLVERLERDFNKVPNFSIRELEQIINETEVNKQMELLYNIYEEIFREIEERRTNQSSQEDFNNFMDSMKNESSLHLRLMVAFDTTVYPVPKGGAILKIFQQKILENLGDRSSVMFLKKLLNNISQDYCTMLYEWLTQGILNDPYQEFMTYDDLEGKTDNIFDTRDRAWDTQYFIRKDVLLRDCDSEEDKNLLFKMLRTGILLKVVRASLQIPTIPSNSSDITIQEINDFADLMEGSNLELYVDKCYSRANEIFLKLFFQGYDLINVLKHLQQIFLGYQSGHNVLKFLTKNMGELTKHYRNDNNANYDKLLQNFELERQSENPNNLMRQLLMIQFDTETLPQVLSHYLQIYPEVPENNSANDDSDPLMHANNFKNMNAILFDELSKERTGAYHGSNLELYTPKSAIYHLKFDINIPYPLNIIISRTCMIKYQIILRYQLVLQYHSRLLDETWMDLNKTPSWKYRGYSHTVKRRIVRATRVLHAKMNHFIKTIMEYFNQNVIDKEVYSLEKCYRNPTLAVAIQNELEGGLTNIMTNRCLSDLIPLQLQIFDIVYKFCKFIKSMRAKLCQLDPVLYEKHKSGMMKTLNEGYRTNNGGQEDVGYQEDAALELIQKLIEYISNASSIFRKCLINFTQELSTEKFDFYDSSSVDAAGIERVLYSIVPPRSASASSQR.

This sequence belongs to the TUBGCP family. Interacts with TUB4, SPC72 and SPC98.

It localises to the nucleus. It is found in the cytoplasm. Its subcellular location is the cytoskeleton. The protein localises to the microtubule organizing center. The protein resides in the spindle pole body. Functionally, involved in microtubule organization by the microtubule organizing center, the spindle pole body (SPB). Probably part of the microtubule attachment site at the SPB. This chain is Spindle pole body component SPC97 (SPC97), found in Saccharomyces cerevisiae (strain ATCC 204508 / S288c) (Baker's yeast).